A 103-amino-acid polypeptide reads, in one-letter code: uncharacterized protein (103 aa).

Residues 35–57 (PFVSMFQTFLEVLTATVLAFTAY) traverse the membrane as a helical segment.

It localises to the host membrane. This is an uncharacterized protein from Acidianus bottle-shaped virus (isolate Italy/Pozzuoli) (ABV).